We begin with the raw amino-acid sequence, 236 residues long: 2,3,4,5-tetrahydropyridine-2,6-dicarboxylate N-acetyltransferase (236 aa).

It belongs to the transferase hexapeptide repeat family. DapH subfamily.

The enzyme catalyses (S)-2,3,4,5-tetrahydrodipicolinate + acetyl-CoA + H2O = L-2-acetamido-6-oxoheptanedioate + CoA. Its pathway is amino-acid biosynthesis; L-lysine biosynthesis via DAP pathway; LL-2,6-diaminopimelate from (S)-tetrahydrodipicolinate (acetylase route): step 1/3. Catalyzes the transfer of an acetyl group from acetyl-CoA to tetrahydrodipicolinate. The sequence is that of 2,3,4,5-tetrahydropyridine-2,6-dicarboxylate N-acetyltransferase from Geobacillus thermodenitrificans (strain NG80-2).